The primary structure comprises 47 residues: PhoP/PhoQ regulator MgrB (47 aa).

The helical transmembrane segment at 6-26 threads the bilayer; the sequence is WVALVVVVLACLLLWAQVFNM.

Belongs to the MgrB family. As to quaternary structure, may form homooligomers. Probably interacts with the periplasmic domain of PhoQ.

Its subcellular location is the cell inner membrane. In terms of biological role, phoP-regulated transcription is redox-sensitive, being activated when the periplasm becomes more reducing. MgrB acts between DsbA/DsbB and PhoP/PhoQ in this pathway. Represses PhoP/PhoQ signaling, possibly by binding to the periplasmic domain of PhoQ, altering its activity and that of downstream effector PhoP. The polypeptide is PhoP/PhoQ regulator MgrB (Escherichia coli O127:H6 (strain E2348/69 / EPEC)).